The sequence spans 254 residues: MFAFLTSKKVGILPSRWGSSRFPGKPLAKILGKTLVQRSYENALSSQSLDCVVVATDDQRIFDHVVEFGGLCVMTSTSCANGTERVEEVVSRHFPQAEIVVNIQGDEPCLSPTVIDGLVSTLENNPAADMVTPVTETTDPEAILTDHKVKCVFDKNGKALYFSRSAIPHNFKHPTPIYLHIGVYAFRKAFLSEYVKIPPSSLSLAEDLEQLRVLETGRSIYVHVVQNATGPSVDYPEDITKVEQYLLCLSKASF.

Belongs to the KdsB family.

The protein resides in the cytoplasm. It carries out the reaction 3-deoxy-alpha-D-manno-oct-2-ulosonate + CTP = CMP-3-deoxy-beta-D-manno-octulosonate + diphosphate. Its pathway is nucleotide-sugar biosynthesis; CMP-3-deoxy-D-manno-octulosonate biosynthesis; CMP-3-deoxy-D-manno-octulosonate from 3-deoxy-D-manno-octulosonate and CTP: step 1/1. The protein operates within bacterial outer membrane biogenesis; lipopolysaccharide biosynthesis. In terms of biological role, activates KDO (a required 8-carbon sugar) for incorporation into bacterial lipopolysaccharide in Gram-negative bacteria. The sequence is that of 3-deoxy-manno-octulosonate cytidylyltransferase from Chlamydia trachomatis serovar L2 (strain ATCC VR-902B / DSM 19102 / 434/Bu).